A 281-amino-acid polypeptide reads, in one-letter code: CCAAT/enhancer-binding protein epsilon (281 aa).

Residues 1-30 form a disordered region; the sequence is MSHGTYYECEPRGGQQPLEFSGGRAGPGEL. Lys121 is covalently cross-linked (Glycyl lysine isopeptide (Lys-Gly) (interchain with G-Cter in SUMO2)). Phosphoserine is present on Ser181. The bZIP domain maps to 204 to 267; sequence SLEYRLRRER…DTLRNLFRQI (64 aa). Residues 208–245 form a basic motif region; the sequence is RLRRERNNIAVRKSRDKAKRRIMETQQKVLEYMAENER. Residues 246-267 are leucine-zipper; sequence LRNRVDQLTQELDTLRNLFRQI.

Belongs to the bZIP family. C/EBP subfamily. Binds DNA as a homodimer and as a heterodimer. Can form stable heterodimers with CEBPA, CEBPB and CEBPD. Interacts with GATA1 and SPI1. Interacts with SMARCD2. Post-translationally, phosphorylated.

It localises to the nucleus. Transcriptional activator. C/EBP are DNA-binding proteins that recognize two different motifs: the CCAAT homology common to many promoters and the enhanced core homology common to many enhancers. Required for the promyelocyte-myelocyte transition in myeloid differentiation. This is CCAAT/enhancer-binding protein epsilon (Cebpe) from Mus musculus (Mouse).